Reading from the N-terminus, the 147-residue chain is Calcium-regulated heat-stable protein 1 (147 aa).

The span at 1–12 (MSSEPPPPPQPP) shows a compositional bias: pro residues. The disordered stretch occupies residues 1 to 52 (MSSEPPPPPQPPTHQASVGLLDTPRSRERSPSPLRGNVVPSPLPTRRTRTFS). N-acetylserine is present on Ser2. Phosphoserine is present on residues Ser30, Ser32, and Ser41. A Phosphothreonine modification is found at Thr45. Phosphoserine occurs at positions 52 and 58. Residues 62–129 (VYKGVCKCFC…KLQAVEVVIT (68 aa)) form the CSD domain. Residues Ser146 and Ser147 each carry the phosphoserine modification.

As to quaternary structure, homodimer. Interacts with STYX. Dephosphorylated by calcineurin in a Ca(2+) dependent manner. Can be phosphorylated by DYRK2 (in vitro).

The protein localises to the cytoplasm. It localises to the P-body. Its subcellular location is the cytoplasmic granule. Its function is as follows. Binds mRNA and regulates the stability of target mRNA. Binds single-stranded DNA (in vitro). The chain is Calcium-regulated heat-stable protein 1 (CARHSP1) from Homo sapiens (Human).